The chain runs to 334 residues: Dipeptide transport ATP-binding protein DppF (334 aa).

Residues 13 to 262 (LQAIDLKKHY…PRHPYTQALL (250 aa)) enclose the ABC transporter domain. 55–62 (GESGCGKS) lines the ATP pocket.

It belongs to the ABC transporter superfamily. The complex is composed of two ATP-binding proteins (DppD and DppF), two transmembrane proteins (DppB and DppC) and a solute-binding protein (DppA). MppA can replace DppA as binding protein for heme and ALA transport.

The protein resides in the cell inner membrane. It catalyses the reaction a dipeptide(out) + ATP + H2O = a dipeptide(in) + ADP + phosphate + H(+). Its function is as follows. Part of the ABC transporter DppABCDF involved in dipeptide transport. Responsible for energy coupling to the transport system. When a foreign outer membrane heme receptor is expressed in E.coli, DppABCDF can also transport heme and its precursor, 5-aminolevulinic acid (ALA), from the periplasm into the cytoplasm. The polypeptide is Dipeptide transport ATP-binding protein DppF (dppF) (Escherichia coli (strain K12)).